The primary structure comprises 229 residues: NAD(P)H-quinone oxidoreductase subunit K, chloroplastic (229 aa).

Positions 43, 44, 108, and 139 each coordinate [4Fe-4S] cluster.

Belongs to the complex I 20 kDa subunit family. As to quaternary structure, NDH is composed of at least 16 different subunits, 5 of which are encoded in the nucleus. It depends on [4Fe-4S] cluster as a cofactor.

It localises to the plastid. It is found in the chloroplast thylakoid membrane. The enzyme catalyses a plastoquinone + NADH + (n+1) H(+)(in) = a plastoquinol + NAD(+) + n H(+)(out). It catalyses the reaction a plastoquinone + NADPH + (n+1) H(+)(in) = a plastoquinol + NADP(+) + n H(+)(out). Functionally, NDH shuttles electrons from NAD(P)H:plastoquinone, via FMN and iron-sulfur (Fe-S) centers, to quinones in the photosynthetic chain and possibly in a chloroplast respiratory chain. The immediate electron acceptor for the enzyme in this species is believed to be plastoquinone. Couples the redox reaction to proton translocation, and thus conserves the redox energy in a proton gradient. The sequence is that of NAD(P)H-quinone oxidoreductase subunit K, chloroplastic from Piper cenocladum (Ant piper).